Here is a 230-residue protein sequence, read N- to C-terminus: ATP synthase subunit a (230 aa).

5 consecutive transmembrane segments (helical) span residues 17–37 (LPITQSVLTTWFIMISLFIMA), 78–98 (IFPFVATLWIFILVSNLIGVI), 107–127 (DLSVTASLAIMTFLSVHWFGI), 165–187 (LFGNIMSLQLTALIVLMIAGFLV), and 198–218 (EAIIQAYIFGMLALIYIAGGI).

Belongs to the ATPase A chain family. As to quaternary structure, F-type ATPases have 2 components, CF(1) - the catalytic core - and CF(0) - the membrane proton channel. CF(1) has five subunits: alpha(3), beta(3), gamma(1), delta(1), epsilon(1). CF(0) has three main subunits: a(1), b(2) and c(9-12). The alpha and beta chains form an alternating ring which encloses part of the gamma chain. CF(1) is attached to CF(0) by a central stalk formed by the gamma and epsilon chains, while a peripheral stalk is formed by the delta and b chains.

Its subcellular location is the cell inner membrane. In terms of biological role, key component of the proton channel; it plays a direct role in the translocation of protons across the membrane. The chain is ATP synthase subunit a from Legionella pneumophila (strain Paris).